The sequence spans 130 residues: MVESIVEKCVEQVHNRFKLVLLASQRTHDLSTGASDPVEMVKFKDHKDTIVSLYEIAEKKVNTHELFNLLVKRCKEHMKGNTDNTYINSPSKLANLLNFSDHQLNTSLDVSQESHDDEIDDQDSGEEVPI.

The disordered stretch occupies residues 107–130 (SLDVSQESHDDEIDDQDSGEEVPI). The span at 115 to 130 (HDDEIDDQDSGEEVPI) shows a compositional bias: acidic residues.

It belongs to the RNA polymerase subunit omega family. The RNAP catalytic core consists of 2 alpha, 1 beta, 1 beta' and 1 omega subunit. When a sigma factor is associated with the core the holoenzyme is formed, which can initiate transcription.

It carries out the reaction RNA(n) + a ribonucleoside 5'-triphosphate = RNA(n+1) + diphosphate. In terms of biological role, promotes RNA polymerase assembly. Latches the N- and C-terminal regions of the beta' subunit thereby facilitating its interaction with the beta and alpha subunits. In Wolbachia pipientis subsp. Culex pipiens (strain wPip), this protein is DNA-directed RNA polymerase subunit omega.